A 484-amino-acid polypeptide reads, in one-letter code: MVSTLEKTNVGSITQIIGPVVDVKFPSGNLPEIYNALTITAKNEAGQDVSVTCEVQQLLGDNQVRAVAMSATDGLVRGMEVVDTRAAISVPVGNATLGRIFNVVGEPVDELGPVGTEDKSPIHREAPKLVDLETQPSVFETGIKVVDLLAPYRRGGKIGLFGGAGVGKTVIIMELINNIAKAHGGVSVFGGVGERTREGNDLYNEMIESKVINPENLSESKVALVYGQMNEPPGARMRVGLSALTMAEYFRDVSKQDVLLFIDNIFRFVQAGSEVSALLGRMPSAVGYQPTLGTEMGELQERITSTKEGSITSIQAVYVPADDLTDPAPATTFAHLDATTVLSRGLASKGIYPAVDPLDSTSTMLQPSVVGKEHYDVARAVQSTLQRYKELQDIIAILGLDELSEDDRLVVARARKIERFLSQPFFVAEVFTGSPGQYVKLEDTMKGFKMILSGELDDLPEQAFYMVGGIDQVIAKAEKLKAEA.

An ATP-binding site is contributed by 162–169; it reads GGAGVGKT.

This sequence belongs to the ATPase alpha/beta chains family. As to quaternary structure, F-type ATPases have 2 components, CF(1) - the catalytic core - and CF(0) - the membrane proton channel. CF(1) has five subunits: alpha(3), beta(3), gamma(1), delta(1), epsilon(1). CF(0) has four main subunits: a(1), b(1), b'(1) and c(9-12).

The protein localises to the cellular thylakoid membrane. It carries out the reaction ATP + H2O + 4 H(+)(in) = ADP + phosphate + 5 H(+)(out). Produces ATP from ADP in the presence of a proton gradient across the membrane. The catalytic sites are hosted primarily by the beta subunits. The chain is ATP synthase subunit beta from Trichodesmium erythraeum (strain IMS101).